Consider the following 412-residue polypeptide: Multifunctional CCA protein (412 aa).

2 residues coordinate ATP: G8 and R11. CTP is bound by residues G8 and R11. Residues D21 and D23 each contribute to the Mg(2+) site. Residues R91, R137, and R140 each coordinate ATP. CTP is bound by residues R91, R137, and R140. Positions 228-329 (TGIHTLMTLS…VKLFDSIDAW (102 aa)) constitute an HD domain.

This sequence belongs to the tRNA nucleotidyltransferase/poly(A) polymerase family. Bacterial CCA-adding enzyme type 1 subfamily. Monomer. Can also form homodimers and oligomers. The cofactor is Mg(2+). It depends on Ni(2+) as a cofactor.

The catalysed reaction is a tRNA precursor + 2 CTP + ATP = a tRNA with a 3' CCA end + 3 diphosphate. It catalyses the reaction a tRNA with a 3' CCA end + 2 CTP + ATP = a tRNA with a 3' CCACCA end + 3 diphosphate. Its function is as follows. Catalyzes the addition and repair of the essential 3'-terminal CCA sequence in tRNAs without using a nucleic acid template. Adds these three nucleotides in the order of C, C, and A to the tRNA nucleotide-73, using CTP and ATP as substrates and producing inorganic pyrophosphate. tRNA 3'-terminal CCA addition is required both for tRNA processing and repair. Also involved in tRNA surveillance by mediating tandem CCA addition to generate a CCACCA at the 3' terminus of unstable tRNAs. While stable tRNAs receive only 3'-terminal CCA, unstable tRNAs are marked with CCACCA and rapidly degraded. In Shigella sonnei (strain Ss046), this protein is Multifunctional CCA protein.